The following is a 126-amino-acid chain: Large ribosomal subunit protein uL22 (126 aa).

It belongs to the universal ribosomal protein uL22 family. In terms of assembly, part of the 50S ribosomal subunit.

Its function is as follows. This protein binds specifically to 23S rRNA; its binding is stimulated by other ribosomal proteins, e.g. L4, L17, and L20. It is important during the early stages of 50S assembly. It makes multiple contacts with different domains of the 23S rRNA in the assembled 50S subunit and ribosome. In terms of biological role, the globular domain of the protein is located near the polypeptide exit tunnel on the outside of the subunit, while an extended beta-hairpin is found that lines the wall of the exit tunnel in the center of the 70S ribosome. The chain is Large ribosomal subunit protein uL22 from Dinoroseobacter shibae (strain DSM 16493 / NCIMB 14021 / DFL 12).